The following is a 1372-amino-acid chain: MSVVNFYGQLSNTQQFDQIRINIASPDQVRSWSFGEVTKPETINYRTFKPEKDGLFCARIFGPVKDYECLCGKYKRMKNRGITCEKCGVEVTVSRVRRERMGHIELAAPVAHIWFLKSLPSRISTLLDMTMRDVEKILYFENYVVVDPGLSILQKGELLTEEELQKAKDKYGEDAFTASIGAEVIQQMLKELDFSKLKQELYDELHITSSEVKKKKLVKRLKLVEDFLESENKPEWMIMDVLPVIPPEIRPLVMLDGGRFATSDLNELYRRVINRNNRLKKLIESKAPDIIVRNEKRMLQEAVDALFDNGRRGRAAKNANKRPFKSLSDMLKGKQGRFRQNLLGKRVDYSGRSVIVVGPELKLHQCGLPKKMALELFKPFIYSKLELYGIATTIKAAKRMVEAEKPEVWDVLEEVIREHPVLLNRAPTLHRLGIQAFEPLLIEGKAIQLHPLVCAAFNADFDGDQMAVHIPLSIEAQLEARVFMMSTNNILSPANGRPIIVPDKDIVLGLYYLTIAFDNEVGEGMMFSDLAEMEHALYNKFITIHTKIKYRRDQLNAEGKMVPVIIDTTYGRLMVGELLPSNPNIEFKFINKQLTKKDISLVIDLVYRHCGQKATVIFADQLMKLGFKYACSSGISFGMDDMVVPESKSTHINETQLEIKEFEQQYSNGLITYGEKYNKVVDAWSRCTDRVANDMMKEIATPPVNDYPNHQKINAIYMMAISGARGSFQQIKQLGGMRGLMTKSNGQIIQTPIISNFKEGLTEFECFNSANGMRKGQIDTALKTASSGYLTRKLVDVAQDCIITEKDCGTDKGIEVKSVIEGGEIIVPLAEKILGRTAAIDIFHPVTNDLILNKGELINESKLEQIESAGLDRIMIKSVLTCESSTGICSICYGRDLATGTLVSEGEAIGVIAAQSIGEPGTQLTMRTFHIGGAATKGAEVSSVEASYDAKVKIISRNVVINSEERKIVMSRNCELLLLDNNGNEKARHKIPYGARLLVDDGDMVIKTQKLAEWDPYTIPIITEKSGKVLFKDMVEGISIRDVTDEATGIPSKVIIESKQYSRGAELRPRIQLLDSKGEVITLSNGLEARYYLPVGAVLSVEDGIQISVGDIIARIPKESTTTKDITGGLPRVAELVEARRPKDHAVIAEVDGRVEFGKDYKSKRRIIIHPIDGTMSIEYMVPKGKHVVVNEGDFVKKGDLLIDGNPVLQDILKVMGVEVLANYIVKEVQAVYRLQGVKIDDKHIEVIIRQMLQKVEVTDSGGTTLLVGEKIDRHEFDEINAKAMKNGLKPAEAQLILQGITKASLQTRSFISAASFQETTRVLTEAAIAGKVDKLRGLKENVIVGRLVPAGTGYFMDKMRKAAVKLDEENV.

Zn(2+) is bound by residues cysteine 69, cysteine 71, cysteine 84, and cysteine 87. The Mg(2+) site is built by aspartate 460, aspartate 462, and aspartate 464. Residues cysteine 808, cysteine 882, cysteine 889, and cysteine 892 each contribute to the Zn(2+) site.

It belongs to the RNA polymerase beta' chain family. In terms of assembly, the RNAP catalytic core consists of 2 alpha, 1 beta, 1 beta' and 1 omega subunit. When a sigma factor is associated with the core the holoenzyme is formed, which can initiate transcription. Requires Mg(2+) as cofactor. Zn(2+) serves as cofactor.

The enzyme catalyses RNA(n) + a ribonucleoside 5'-triphosphate = RNA(n+1) + diphosphate. Functionally, DNA-dependent RNA polymerase catalyzes the transcription of DNA into RNA using the four ribonucleoside triphosphates as substrates. The protein is DNA-directed RNA polymerase subunit beta' of Rickettsia prowazekii (strain Madrid E).